The sequence spans 294 residues: Putative glutamine amidotransferase HI_1037 (294 aa).

The active site involves C18. The 249-residue stretch at 18-266 (CQLLGMNCNT…NGGFVFFKNG (249 aa)) folds into the Glutamine amidotransferase type-2 domain.

This is Putative glutamine amidotransferase HI_1037 from Haemophilus influenzae (strain ATCC 51907 / DSM 11121 / KW20 / Rd).